A 63-amino-acid polypeptide reads, in one-letter code: Cytochrome c oxidase subunit 5C-1 (63 aa).

The helical transmembrane segment at 15 to 34 threads the bilayer; the sequence is SEVKELIIGSVLGLAAGGLW.

This sequence belongs to the cytochrome c oxidase subunit 5C family.

The protein resides in the mitochondrion inner membrane. Its function is as follows. This protein is one of the nuclear-coded polypeptide chains of cytochrome c oxidase, the terminal oxidase in mitochondrial electron transport. In Helianthus annuus (Common sunflower), this protein is Cytochrome c oxidase subunit 5C-1 (COX5C1).